The following is a 675-amino-acid chain: Parasporal crystal protein Cry18Ba (675 aa).

The protein belongs to the delta endotoxin family.

Its function is as follows. Binds to the brush border membrane vesicles of scarab larvae and damages the gut wall somehow to allow the vegetative cells of P.popilliae to enter the hemolymph. The polypeptide is Parasporal crystal protein Cry18Ba (cry18Ba) (Paenibacillus popilliae (Bacillus popilliae)).